The sequence spans 502 residues: Glycerol kinase (502 aa).

Thr-14 contributes to the ADP binding site. The ATP site is built by Thr-14, Thr-15, and Ser-16. Thr-14 contributes to the sn-glycerol 3-phosphate binding site. Arg-18 serves as a coordination point for ADP. 4 residues coordinate sn-glycerol 3-phosphate: Arg-84, Glu-85, Tyr-136, and Asp-246. Glycerol is bound by residues Arg-84, Glu-85, Tyr-136, Asp-246, and Gln-247. ADP-binding residues include Thr-268 and Gly-311. Residues Thr-268, Gly-311, Gln-315, and Gly-412 each coordinate ATP. ADP contacts are provided by Gly-412 and Asn-416.

This sequence belongs to the FGGY kinase family. Homotetramer and homodimer (in equilibrium). Heterodimer with EIIA-Glc. Binds 1 zinc ion per glycerol kinase EIIA-Glc dimer. The zinc ion is important for dimerization.

It carries out the reaction glycerol + ATP = sn-glycerol 3-phosphate + ADP + H(+). Its pathway is polyol metabolism; glycerol degradation via glycerol kinase pathway; sn-glycerol 3-phosphate from glycerol: step 1/1. Its activity is regulated as follows. Activity of this regulatory enzyme is affected by several metabolites. Allosterically and non-competitively inhibited by fructose 1,6-bisphosphate (FBP) and unphosphorylated phosphocarrier protein EIIA-Glc (III-Glc), an integral component of the bacterial phosphotransferase (PTS) system. In terms of biological role, key enzyme in the regulation of glycerol uptake and metabolism. Catalyzes the phosphorylation of glycerol to yield sn-glycerol 3-phosphate. The protein is Glycerol kinase of Escherichia coli O7:K1 (strain IAI39 / ExPEC).